The primary structure comprises 224 residues: Dimethyl sulfoxide reductase transcriptional activator (224 aa).

The region spanning 158–209 (LTDKQREAAAAAVAKGYYATPRGADLSDLATALGISKSAVSQRLSAVESKLA) is the HTH bat-type domain.

Functionally, involved in activating dmsEABCD gene expression related to dimethyl sulfoxide (DMSO) reductase. Required for anaerobic respiration on dimethyl sulfoxide (DMSO) and trimethylamine N-oxide (TMAO). This Halobacterium salinarum (strain ATCC 700922 / JCM 11081 / NRC-1) (Halobacterium halobium) protein is Dimethyl sulfoxide reductase transcriptional activator (dmsR).